The following is a 1027-amino-acid chain: Kinesin heavy chain isoform 5A (1027 aa).

A2 is subject to N-acetylalanine. A Kinesin motor domain is found at 9–327 (SIKVLCRFRP…LMFGQRAKTI (319 aa)). 86 to 93 (GQTSSGKT) serves as a coordination point for ATP. Residues 174–315 (VSSPEEILDV…PSSYNDAETK (142 aa)) are microtubule-binding. The tract at residues 271–361 (EGTKSYVPYR…KTKAQKETIA (91 aa)) is necessary for interaction with ZFYVE27. Residues 331-905 (ASVNLELTAE…EVDRIKEAVR (575 aa)) are a coiled coil. The interaction with BICD2 stretch occupies residues 353 to 1027 (TKAQKETIAK…FPLHQETAAS (675 aa)). At T397 the chain carries Phosphothreonine. The interval 906 to 936 (YKSSGKRGHSAQIAKPVRPGHYPASSPTNPY) is disordered. Positions 907–1027 (KSSGKRGHSA…FPLHQETAAS (121 aa)) are globular.

It belongs to the TRAFAC class myosin-kinesin ATPase superfamily. Kinesin family. Kinesin subfamily. In terms of assembly, oligomer composed of two heavy chains and two light chains. Interacts with GRIP1. Interacts with FMR1 (via C-terminus); this interaction is increased in a mGluR-dependent manner. Interacts with BORCS5. Interacts with ZFYVE27. Interacts with VAPA, VAPB, SURF4, RAB11A (GDP-bound form), RAB11B (GDP-bound form) and RTN3 in a ZFYVE27-dependent manner. Interacts with BICD2. Interacts with DTNB. As to expression, expressed in brain.

Its subcellular location is the cytoplasm. The protein localises to the perinuclear region. It localises to the cytoskeleton. It is found in the perikaryon. It catalyses the reaction ATP + H2O + a kinesin associated with a microtubule at position (n) = ADP + phosphate a kinesin associated with a microtubule at position (n+1, toward the plus end).. Functionally, microtubule-dependent motor required for slow axonal transport of neurofilament proteins (NFH, NFM and NFL). Can induce formation of neurite-like membrane protrusions in non-neuronal cells in a ZFYVE27-dependent manner. The ZFYVE27-KIF5A complex contributes to the vesicular transport of VAPA, VAPB, SURF4, RAB11A, RAB11B and RTN3 proteins in neurons. Required for anterograde axonal transportation of MAPK8IP3/JIP3 which is essential for MAPK8IP3/JIP3 function in axon elongation. The protein is Kinesin heavy chain isoform 5A of Rattus norvegicus (Rat).